The following is a 176-amino-acid chain: NADH-quinone oxidoreductase subunit I (176 aa).

4Fe-4S ferredoxin-type domains lie at 47 to 77 (LTRD…MQAA) and 87 to 116 (AWFR…MTSE). [4Fe-4S] cluster-binding residues include Cys57, Cys60, Cys63, Cys67, Cys96, Cys99, Cys102, and Cys106.

It belongs to the complex I 23 kDa subunit family. As to quaternary structure, NDH-1 is composed of 14 different subunits. Subunits NuoA, H, J, K, L, M, N constitute the membrane sector of the complex. [4Fe-4S] cluster is required as a cofactor.

The protein resides in the cell inner membrane. The catalysed reaction is a quinone + NADH + 5 H(+)(in) = a quinol + NAD(+) + 4 H(+)(out). Functionally, NDH-1 shuttles electrons from NADH, via FMN and iron-sulfur (Fe-S) centers, to quinones in the respiratory chain. The immediate electron acceptor for the enzyme in this species is believed to be ubiquinone. Couples the redox reaction to proton translocation (for every two electrons transferred, four hydrogen ions are translocated across the cytoplasmic membrane), and thus conserves the redox energy in a proton gradient. The protein is NADH-quinone oxidoreductase subunit I of Syntrophotalea carbinolica (strain DSM 2380 / NBRC 103641 / GraBd1) (Pelobacter carbinolicus).